The sequence spans 270 residues: High choriolytic enzyme 1 (270 aa).

An N-terminal signal peptide occupies residues 1–20 (MNLAPSTCLLLLFLLDIAQA). A propeptide spans 21-70 (LPVWDEEGHEEGHEEGDGDDFVDITTRILTSNNNTDQLLLEGDLVAPTNR) (activation peptide). Asn53 is a glycosylation site (N-linked (GlcNAc...) asparagine). The Peptidase M12A domain maps to 71 to 270 (NAMKCWSSSC…TRINVLYNCR (200 aa)). Disulfide bonds link Cys75–Cys80, Cys120–Cys269, and Cys141–Cys161. A Zn(2+)-binding site is contributed by His169. Residue Glu170 is part of the active site. His173 and His179 together coordinate Zn(2+).

The cofactor is Zn(2+).

It localises to the zymogen granule. It catalyses the reaction Hydrolysis of the inner layer of fish egg envelope. Also hydrolysis of casein and small molecule substrates such as succinyl-Leu-Leu-Val-Tyr-|-7-(4-methyl)coumarylamide.. In terms of biological role, participates in the breakdown of the egg envelope, which is derived from the egg extracellular matrix, at the time of hatching. Thus allowing the newly hatched fish to swim free. HCE binds tightly to the egg envelope while it exerts the choriolytic swelling action. This Oryzias latipes (Japanese rice fish) protein is High choriolytic enzyme 1 (hcea).